Consider the following 55-residue polypeptide: MAKPTTIKIRLNSTAGTGHFYVTKKNARTMTDKMVVRKYDPVKREHVEYKEGKIK.

This sequence belongs to the bacterial ribosomal protein bL33 family.

The chain is Large ribosomal subunit protein bL33 from Cereibacter sphaeroides (strain ATCC 17029 / ATH 2.4.9) (Rhodobacter sphaeroides).